Consider the following 104-residue polypeptide: Protein RnfH (104 aa).

The tract at residues 80-104 is disordered; that stretch reads PLTADPKLNRKRRAKEKASAGKASN.

Belongs to the UPF0125 (RnfH) family.

This chain is Protein RnfH, found in Alcanivorax borkumensis (strain ATCC 700651 / DSM 11573 / NCIMB 13689 / SK2).